The primary structure comprises 2472 residues: Spectrin alpha chain, non-erythrocytic 1 (2472 aa).

M1 bears the N-acetylmethionine mark. 9 Spectrin repeats span residues 45–146 (RFQF…IKLL), 150–251 (KLVQ…QGKL), 256–358 (EVQR…ARLD), 361–465 (YRLQ…QYEQ), 468–570 (DLQL…AQLA), 574–676 (HLQQ…KLRE), 679–781 (QQQQ…QKLA), 785–888 (RLQQ…DLED), and 891–961 (QAQQ…QQVA). Position 587 is a phosphoserine (S587). N6-acetyllysine is present on K637. An N6-acetyllysine modification is found at K803. S924, S982, S999, S1029, S1031, and S1041 each carry phosphoserine. The region spanning 967 to 1026 (TGKELVLALYDYQEKSPREVTMKKGDILTLLNSTNKDWWKVEVNDRQGFVPAAYVKKLDP) is the SH3 domain. A Spectrin 10 repeat occupies 1096–1166 (LFREANELQQ…LESEGLMAEE (71 aa)). A Phosphotyrosine modification is found at Y1176. Phosphoserine is present on residues S1190, S1207, S1217, S1291, S1306, S1323, and S1338. Residues 1233–1336 (HEVQRFHRDA…RADQRKAKLG (104 aa)) form a Spectrin 11 repeat. Spectrin repeat units lie at residues 1339–1441 (HDLQ…RMML) and 1446–1549 (ELQL…KLGE). K1519 bears the N6-acetyllysine mark. A phosphoserine mark is found at S1550, S1557, S1578, S1615, and S1647. Spectrin repeat units lie at residues 1552–1656 (TLQQ…KLKE), 1659–1762 (KQQN…KLSE), 1764–1868 (HRLH…RLEE), 1871–1974 (EYQQ…KLDE), 1978–2081 (FLQF…KLLE), 2092–2194 (LFLT…LELQ), and 2206–2310 (LRQE…NLEQ). T2020 carries the phosphothreonine modification. At K2052 the chain carries N6-acetyllysine. Residue T2066 is modified to Phosphothreonine. EF-hand domains follow at residues 2323 to 2358 (EALK…LGYD), 2366 to 2401 (EPDP…RETE), and 2404 to 2439 (KSSE…EQAD). The Ca(2+) site is built by D2336, D2338, S2340, R2342, E2347, D2379, N2381, D2383, H2385, and E2390. An N6-acetyllysine modification is found at K2421.

This sequence belongs to the spectrin family. Like erythrocyte spectrin, the spectrin-like proteins are capable of forming dimers which can further associate to tetramers. Interacts (via C-terminal spectrin repeats) with TRPC4. Interacts with CALM and EMD. Interacts with isoform 1 of ACP1. Identified in a complex with ACTN4, CASK, IQGAP1, MAGI2, NPHS1 and SPTBN1. Interacts with SHANK3 (via ANK repeats). Interacts with CLN3; this interaction regulates the fodrin localization at the plasma membrane. Phosphorylation of Tyr-1176 decreases sensitivity to cleavage by calpain in vitro.

The protein resides in the cytoplasm. Its subcellular location is the cytoskeleton. The protein localises to the cell cortex. In terms of biological role, fodrin, which seems to be involved in secretion, interacts with calmodulin in a calcium-dependent manner and is thus candidate for the calcium-dependent movement of the cytoskeleton at the membrane. In Mus musculus (Mouse), this protein is Spectrin alpha chain, non-erythrocytic 1 (Sptan1).